A 391-amino-acid chain; its full sequence is Mannose-6-phosphate isomerase (391 aa).

4 residues coordinate Zn(2+): Gln-97, His-99, Glu-134, and His-255. Arg-274 is a catalytic residue. Residue Lys-280 is modified to N6-acetyllysine.

Belongs to the mannose-6-phosphate isomerase type 1 family. Zn(2+) is required as a cofactor.

Its subcellular location is the cytoplasm. It catalyses the reaction D-mannose 6-phosphate = D-fructose 6-phosphate. Involved in the conversion of glucose to GDP-L-fucose, which can be converted to L-fucose, a capsular polysaccharide. This Escherichia coli (strain K12) protein is Mannose-6-phosphate isomerase (manA).